Consider the following 510-residue polypeptide: Histone deacetylase 3 (510 aa).

The interval 24-338 (RRVCYFYDPE…WCYETGVALG (315 aa)) is histone deacetylase. The active-site Proton donor/acceptor is His-158. 3 residues coordinate Zn(2+): Asp-193, His-195, and Asp-281. The disordered stretch occupies residues 394–510 (PSVQFQERIP…ARNEPGSSPK (117 aa)). Composition is skewed to basic and acidic residues over residues 418–434 (DERH…DHKP) and 448–472 (VKRE…HKGP). Over residues 485-503 (APTADANAVAVNAPGNARN) the composition is skewed to low complexity.

Belongs to the histone deacetylase family. HD Type 1 subfamily. Requires Zn(2+) as cofactor. As to expression, expressed in roots.

The protein localises to the nucleus. The enzyme catalyses N(6)-acetyl-L-lysyl-[histone] + H2O = L-lysyl-[histone] + acetate. Responsible for the deacetylation of lysine residues on the N-terminal part of the core histones (H2A, H2B, H3 and H4). Histone deacetylation gives a tag for epigenetic repression and plays an important role in transcriptional regulation, cell cycle progression and developmental events. Histone deacetylases act via the formation of large multiprotein complexes. This Oryza sativa subsp. japonica (Rice) protein is Histone deacetylase 3.